The primary structure comprises 401 residues: Elongation factor Tu (401 aa).

A tr-type G domain is found at 10 to 211 (KPHLNIGTIG…AVDTYVPNPT (202 aa)). A G1 region spans residues 19 to 26 (GHVDHGKT). GTP is bound at residue 19–26 (GHVDHGKT). Thr-26 is a binding site for Mg(2+). The G2 stretch occupies residues 62–66 (GITIA). The G3 stretch occupies residues 83–86 (DCPG). Residues 83–87 (DCPGH) and 138–141 (NKAD) each bind GTP. The tract at residues 138–141 (NKAD) is G4. The interval 179–181 (SAL) is G5.

The protein belongs to the TRAFAC class translation factor GTPase superfamily. Classic translation factor GTPase family. EF-Tu/EF-1A subfamily. Monomer.

It localises to the cytoplasm. It catalyses the reaction GTP + H2O = GDP + phosphate + H(+). GTP hydrolase that promotes the GTP-dependent binding of aminoacyl-tRNA to the A-site of ribosomes during protein biosynthesis. The sequence is that of Elongation factor Tu from Leptospira biflexa serovar Patoc (strain Patoc 1 / Ames).